A 393-amino-acid polypeptide reads, in one-letter code: Na(+)/H(+) antiporter NhaA (393 aa).

11 helical membrane-spanning segments follow: residues 14-34 (AAGMMLMMATVLAIALANWSV), 60-80 (LLLWINDALMAIFFLLIGLEV), 96-116 (MLPLAAAVGGMVFPALLFLLF), 125-145 (AGWAIPAATDIAFAIGVLTLL), 155-175 (VFLLALAIIDDLGAILIIALF), 179-199 (QVFWPALAGAVLAIAVLAYMN), 218-238 (VCILKCGVHATLAGVIVGFFI), 263-283 (FLIVPLFAFANAGIVLQGIVL), 292-312 (LGIAAGLLLGKPLGITLFSWL), 330-350 (IVAVSVLCGIGFTMSIFITLL), and 362-382 (YAKLGILLASGLAALLGYLAL).

It belongs to the NhaA Na(+)/H(+) (TC 2.A.33) antiporter family.

The protein resides in the cell inner membrane. The enzyme catalyses Na(+)(in) + 2 H(+)(out) = Na(+)(out) + 2 H(+)(in). Functionally, na(+)/H(+) antiporter that extrudes sodium in exchange for external protons. The sequence is that of Na(+)/H(+) antiporter NhaA from Pectobacterium atrosepticum (strain SCRI 1043 / ATCC BAA-672) (Erwinia carotovora subsp. atroseptica).